We begin with the raw amino-acid sequence, 468 residues long: MDPFADTLQRLREAFVSGRTRPAEFRDAQLKGLSRFLRENKQLLQEALAQDLHKSAFEAEVSEISISQNEINLALRNLRTWMKDEKVSKNLATQLDSAFIRKEPFGLVLILSPWNYPLNLSLGPLVGALAAGNCVVLKPSEISKNTEKVLAEVLPRYLDQSCFAVVLGGPQETGRLLEHKFDYIFFTGNPQVGKIVMTAAAKHLTPVTLELGGKNPCYVDDNCDPQTVANRVAFFRCFNAGQTCVAPDYVLCSPEMQAQLVPALQSAITRFYGDDPQSSPNLGRIISQKHFQRLRGLLSCGRVVIGGQSDECDLYIAPTVLVDVQETDPVMQEEIFGPILPIVNVRSLGQAIDFINRREKPLALYAFSNSSQVVKRVLAQTSSGGFCGNDGFMHLTLASLPFGGVGSSGMGNYHGKFSFDTFSHHRACLLRRPGLEKIYAIRYPPHTPRNLRVLLMAMETRSCSCTLL.

Methionine 1 is modified (N-acetylmethionine). 188 to 193 (GNPQVG) is a binding site for NAD(+). Catalysis depends on residues glutamate 210 and cysteine 244. Cysteine 463 is lipidated: S-palmitoyl cysteine. Cysteine 465 bears the Cysteine methyl ester mark. Cysteine 465 carries the S-geranylgeranyl cysteine lipid modification. Residues 466–468 (TLL) constitute a propeptide, removed in mature form.

This sequence belongs to the aldehyde dehydrogenase family. Dually lipidated in the C-terminus; prenylation occurs prior to, and is a prerequisite for palmitoylation. It is also required for activity towards long-chain substrates.

It is found in the cell membrane. It catalyses the reaction an aldehyde + NAD(+) + H2O = a carboxylate + NADH + 2 H(+). The catalysed reaction is a long-chain fatty aldehyde + NAD(+) + H2O = a long-chain fatty acid + NADH + 2 H(+). It carries out the reaction a medium-chain fatty aldehyde + NAD(+) + H2O = a medium-chain fatty acid + NADH + 2 H(+). The enzyme catalyses octanal + NAD(+) + H2O = octanoate + NADH + 2 H(+). It catalyses the reaction nonanal + NAD(+) + H2O = nonanoate + NADH + 2 H(+). The catalysed reaction is hexadecanoate + NADH + 2 H(+) = hexadecanal + NAD(+) + H2O. It carries out the reaction (2E)-octenal + NAD(+) + H2O = (2E)-octenoate + NADH + 2 H(+). The enzyme catalyses (E)-non-2-enal + NAD(+) + H2O = (E)-non-2-enoate + NADH + 2 H(+). It catalyses the reaction (E)-4-hydroxynon-2-enal + NAD(+) + H2O = (E)-4-hydroxynon-2-enoate + NADH + 2 H(+). The catalysed reaction is (2E)-hexadecenal + NAD(+) + H2O = (E)-hexadec-2-enoate + NADH + 2 H(+). It carries out the reaction benzaldehyde + NAD(+) + H2O = benzoate + NADH + 2 H(+). The enzyme catalyses an aldehyde + NADP(+) + H2O = a carboxylate + NADPH + 2 H(+). It catalyses the reaction a medium-chain fatty aldehyde + NADP(+) + H2O = a medium-chain fatty acid + NADPH + 2 H(+). The catalysed reaction is hexanal + NADP(+) + H2O = hexanoate + NADPH + 2 H(+). It carries out the reaction octanal + NADP(+) + H2O = octanoate + NADPH + 2 H(+). The enzyme catalyses nonanal + NADP(+) + H2O = nonanoate + NADPH + 2 H(+). It catalyses the reaction (2E)-octenal + NADP(+) + H2O = (2E)-octenoate + NADPH + 2 H(+). The catalysed reaction is (E)-non-2-enal + NADP(+) + H2O = (E)-non-2-enoate + NADPH + 2 H(+). It carries out the reaction (E)-4-hydroxynon-2-enal + NADP(+) + H2O = (E)-4-hydroxynon-2-enoate + NADPH + 2 H(+). The enzyme catalyses benzaldehyde + NADP(+) + H2O = benzoate + NADPH + 2 H(+). It functions in the pathway alcohol metabolism; ethanol degradation; acetate from ethanol: step 2/2. Its function is as follows. Oxidizes medium and long chain saturated and unsaturated fatty aldehydes generated in the plasma membrane into non-toxic fatty acids. May have a protective role against the cytotoxicity induced by lipid peroxidation. Short-chain fatty aldehydes are not good substrates. Can use both NADP(+) and NAD(+) as electron acceptor in vitro, however in vivo preference will depend on their tissue levels. Low activity towards acetaldehyde and 3,4-dihydroxyphenylacetaldehyde. Able to metabolize aromatic aldehydes such as benzaldehyde to their acid form. The sequence is that of Aldehyde dehydrogenase family 3 member B1 (ALDH3B1) from Bos taurus (Bovine).